The primary structure comprises 632 residues: MAMESALTSTRVSIPSLCSGISSSHHHHRSLSFLNFPKLSSFKYSFRTISPVPFVVSASSVSPSSPSTSVAQSQDLKIKSVPTKPIEGQKTGTSGLRKKVKVFMQDNYLANWIQALFNSLPLEDYKNGLLVLGGDGRYFNREAAQIIIKIAAGNGVGKILVGKDGILSTQAVSAVIRKREANGGFIMSASHNPGGPEYDWGIKFNYSSGQPAPESITDKIYGNTLSISEIKIADIPDVDLSQLGVTKYGNFSVEVVDPVADYLELMENVFDFSLIRSLVSRPDFRFVFDAMHAVTGAYAKPIFVDKLGASLESIANGVPLEDFGHGHPDPNLTYAEDLVNILYGENGPDFGAASDGDGDRNMILGRSFFVTPSDSVAIIAAQCQYAIHYFQSGPKGLARSMPTSGSLDRVAQKLNLPFFEVPTGWKFFGNLMDAGKLSICGEESFGTGSDHIREKDGIWAVLAWLSILAYRNKDKKSGEKLVSVADVVKDHWATYGRNFFSRYDYEECESEGANNMIEYLRDLISKSKAGDKYGSYSLDFADDFAYTDPVDGSVASKQGVRFVFSDGSRIIFRLSGTGSAGATVRIYIEQFEPDVSKHDMDAQIALKPLIDLALSVSKLKDFTGREKPTVIT.

The N-terminal 72 residues, 1 to 72 (MAMESALTST…PSSPSTSVAQ (72 aa)), are a transit peptide targeting the chloroplast. Residues R97 and S190 each coordinate alpha-D-glucose 1,6-bisphosphate. The Phosphoserine intermediate role is filled by S190. The Mg(2+) site is built by S190, D355, D357, and D359. S190 is subject to Phosphoserine. Residues D359, R360, T423, E442, S444, and K455 each coordinate alpha-D-glucose 1,6-bisphosphate.

The protein belongs to the phosphohexose mutase family. In terms of assembly, monomer. Requires Mg(2+) as cofactor.

The protein resides in the plastid. It is found in the chloroplast. The enzyme catalyses alpha-D-glucose 1-phosphate = alpha-D-glucose 6-phosphate. It catalyses the reaction O-phospho-L-seryl-[protein] + alpha-D-glucose 1-phosphate = alpha-D-glucose 1,6-bisphosphate + L-seryl-[protein]. It carries out the reaction alpha-D-glucose 1,6-bisphosphate + L-seryl-[protein] = O-phospho-L-seryl-[protein] + alpha-D-glucose 6-phosphate. Its activity is regulated as follows. Inhibited by the Calvin cycle intermediates fructose-1,6-bisphosphate and ribulose-1,5-bisphosphate. Catalyzes the reversible isomerization of alpha-D-glucose 1-phosphate to alpha-D-glucose 6-phosphate. The mechanism proceeds via the intermediate compound alpha-D-glucose 1,6-bisphosphate. This enzyme participates in both the breakdown and synthesis of glucose. Promotes gravitropic responses, negative in shoots but positive in roots, by facilitating starch granules (statoliths) formation. This is Phosphoglucomutase, chloroplastic (PGMP) from Solanum tuberosum (Potato).